The primary structure comprises 302 residues: Tetrahydromethanopterin S-methyltransferase subunit E (302 aa).

6 helical membrane-spanning segments follow: residues Pro-3–Ser-23, Pro-86–Val-106, Ile-132–Leu-152, Val-155–Gly-175, Pro-233–Phe-253, and Leu-259–Trp-279.

This sequence belongs to the MtrE family. In terms of assembly, the complex is composed of 8 subunits; MtrA, MtrB, MtrC, MtrD, MtrE, MtrF, MtrG and MtrH.

The protein resides in the cell membrane. The enzyme catalyses 5-methyl-5,6,7,8-tetrahydromethanopterin + coenzyme M + 2 Na(+)(in) = 5,6,7,8-tetrahydromethanopterin + methyl-coenzyme M + 2 Na(+)(out). It functions in the pathway one-carbon metabolism; methanogenesis from CO(2); methyl-coenzyme M from 5,10-methylene-5,6,7,8-tetrahydromethanopterin: step 2/2. Part of a complex that catalyzes the formation of methyl-coenzyme M and tetrahydromethanopterin from coenzyme M and methyl-tetrahydromethanopterin. This is an energy-conserving, sodium-ion translocating step. This chain is Tetrahydromethanopterin S-methyltransferase subunit E, found in Methanosarcina barkeri (strain Fusaro / DSM 804).